A 190-amino-acid chain; its full sequence is Segregation and condensation protein B (190 aa).

Belongs to the ScpB family. Homodimer. Homodimerization may be required to stabilize the binding of ScpA to the Smc head domains. Component of a cohesin-like complex composed of ScpA, ScpB and the Smc homodimer, in which ScpA and ScpB bind to the head domain of Smc. The presence of the three proteins is required for the association of the complex with DNA.

It localises to the cytoplasm. Functionally, participates in chromosomal partition during cell division. May act via the formation of a condensin-like complex containing Smc and ScpA that pull DNA away from mid-cell into both cell halves. The sequence is that of Segregation and condensation protein B from Bacillus cereus (strain ZK / E33L).